Reading from the N-terminus, the 145-residue chain is Lymphocyte antigen 6 complex locus protein G5c (145 aa).

A signal peptide spans 1–38 (MSGLAASWSLKPLGPHGVTQALCAVLLAVLVTMNVVLG). Positions 55–145 (LHCYRCLLET…NPKNRKNTMH (91 aa)) constitute a UPAR/Ly6 domain. Intrachain disulfides connect C57–C84, C60–C69, C76–C102, C111–C128, and C129–C134. The N-linked (GlcNAc...) asparagine glycan is linked to N91.

Forms oligomers. Post-translationally, N-glycosylated. In terms of tissue distribution, expression restricted to the caput of epididymis. Detected only from day 24 postnatum.

It is found in the secreted. Functionally, may have a role in hematopoietic cell differentiation. This Rattus norvegicus (Rat) protein is Lymphocyte antigen 6 complex locus protein G5c (Ly6g5c).